A 551-amino-acid polypeptide reads, in one-letter code: Interleukin-2 receptor subunit beta (551 aa).

Positions 1 to 26 are cleaved as a signal peptide; sequence MATLALSWCLPLLILLLPLATSSASA. The Extracellular segment spans residues 27–240; that stretch reads AVNGTSRFTC…TKPAALGKDT (214 aa). N-linked (GlcNAc...) asparagine glycans are attached at residues asparagine 29, asparagine 43, and asparagine 71. A disulfide bridge links cysteine 36 with cysteine 46. Residues cysteine 74 and cysteine 86 are joined by a disulfide bond. One can recognise a Fibronectin type-III domain in the interval 134–234; that stretch reads APISLQVVHV…QPLAFRTKPA (101 aa). Residue asparagine 149 is glycosylated (N-linked (GlcNAc...) asparagine). The short motif at 220–224 is the WSXWS motif element; that stretch reads WSPWS. The chain crosses the membrane as a helical span at residues 241–265; sequence IPWLGHLLVGLSGAFGFIILVYLLI. Residues 266–551 lie on the Cytoplasmic side of the membrane; that stretch reads NCRNTGPWLK…LQDQDPTHLV (286 aa). A Box 1 motif motif is present at residues 278–286; it reads LKCHTPDPS. 3 disordered regions span residues 389–417, 430–484, and 496–517; these read EEEP…EDDA, FSPS…DLVD, and AGEQ…ARPP.

This sequence belongs to the type I cytokine receptor family. Type 4 subfamily. In terms of assembly, non-covalent dimer of an alpha and a beta subunit. IL2R exists in 3 different forms: a high affinity dimer, an intermediate affinity monomer (beta subunit), and a low affinity monomer (alpha subunit). The high and intermediate affinity forms also associate with a gamma subunit. Interacts with SHB upon interleukin stimulation.

It is found in the cell membrane. The protein resides in the cell surface. In terms of biological role, receptor for interleukin-2. This beta subunit is involved in receptor mediated endocytosis and transduces the mitogenic signals of IL2. Probably in association with IL15RA, involved in the stimulation of neutrophil phagocytosis by IL15. This chain is Interleukin-2 receptor subunit beta (IL2RB), found in Macaca fascicularis (Crab-eating macaque).